Here is a 280-residue protein sequence, read N- to C-terminus: Transmembrane protein 119 (280 aa).

The signal sequence occupies residues 1-20; that stretch reads MVPWFLLSLLLLARPVPGVA. The Extracellular segment spans residues 21–91; the sequence is YSVSLPASFL…IMDFFRQYVM (71 aa). A glycan (O-linked (Xyl...) (chondroitin sulfate) serine) is linked at serine 36. Positions 38 to 47 are enriched in low complexity; it reads EAEGSSASSP. The disordered stretch occupies residues 38–73; the sequence is EAEGSSASSPSLPPPGTPAFSPTPERPQPTALDGPV. Residues 92-112 form a helical membrane-spanning segment; the sequence is LIAVVGSLTFLIMFIVCAALI. Topologically, residues 113 to 280 are cytoplasmic; that stretch reads TRQKHKATAY…CACNRVSPSV (168 aa). Disordered regions lie at residues 133 to 162 and 181 to 280; these read VDQRDRAGGPRTFSEVPDRAPDSRHEEGLD and PARA…SPSV. Over residues 148-162 the composition is skewed to basic and acidic residues; sequence VPDRAPDSRHEEGLD. Serine 269 carries the phosphoserine modification.

As to quaternary structure, interacts with SMAD1, SMAD5 and RUNX2. In terms of tissue distribution, expressed in spermatocytes and spermatids in the developing testis (at protein level). Expressed in the brain, heart, lung, spleen, skeletal muscle, ovary, testis and epididymis. Predominantly expressed in osteoblasts.

It localises to the cell membrane. The protein resides in the cytoplasm. The protein localises to the endoplasmic reticulum membrane. It is found in the secreted. Its function is as follows. Plays an important role in bone formation and normal bone mineralization. Promotes the differentiation of myoblasts into osteoblasts. May induce the commitment and differentiation of myoblasts into osteoblasts through an enhancement of BMP2 production and interaction with the BMP-RUNX2 pathway. Up-regulates the expression of ATF4 which plays a central role in osteoblast differentiation. Essential for normal spermatogenesis and late testicular differentiation. The polypeptide is Transmembrane protein 119 (Tmem119) (Mus musculus (Mouse)).